We begin with the raw amino-acid sequence, 346 residues long: NADH-cytochrome b5 reductase 2 (346 aa).

Residues 28–50 (GGSNAALYAGLAAAAGAGAYYFL) form a helical membrane-spanning segment. Residues 95–200 (QGFISLKLDS…KGPIPKYPWS (106 aa)) form the FAD-binding FR-type domain. 203–238 (KHDHIALIAGGTGITPMYQLARAIFNNPADKTKVTL) lines the FAD pocket.

This sequence belongs to the flavoprotein pyridine nucleotide cytochrome reductase family. The cofactor is FAD.

The protein localises to the mitochondrion outer membrane. The catalysed reaction is 2 Fe(III)-[cytochrome b5] + NADH = 2 Fe(II)-[cytochrome b5] + NAD(+) + H(+). In terms of biological role, may mediate the reduction of outer membrane cytochrome b5. In Botryotinia fuckeliana (strain B05.10) (Noble rot fungus), this protein is NADH-cytochrome b5 reductase 2 (mcr1).